We begin with the raw amino-acid sequence, 132 residues long: Protein FasE (132 aa).

This is Protein FasE (fasE) from Escherichia coli.